Here is a 250-residue protein sequence, read N- to C-terminus: Probable transcriptional regulatory protein Cvib_1432 (250 aa).

The protein belongs to the TACO1 family.

The protein resides in the cytoplasm. This is Probable transcriptional regulatory protein Cvib_1432 from Chlorobium phaeovibrioides (strain DSM 265 / 1930) (Prosthecochloris vibrioformis (strain DSM 265)).